Reading from the N-terminus, the 806-residue chain is WEB family protein At3g02930, chloroplastic (806 aa).

The N-terminal 78 residues, 1 to 78, are a transit peptide targeting the chloroplast; that stretch reads MASKIKNGLS…PTPPEKTQIR (78 aa). Disordered regions lie at residues 1 to 94 and 380 to 403; these read MASK…QIKE and KSEQ…EKLK. Residues 9–22 show a composition bias toward low complexity; the sequence is LSDTTLRKSSSTSL. The span at 34 to 59 shows a compositional bias: polar residues; it reads PDSNSPSPTQQQSRLSFERPSSNSKP. Coiled-coil stretches lie at residues 88 to 530, 585 to 662, and 698 to 757; these read QSVQ…FESA, DCLK…IEEN, and ETLD…EDLN. The segment covering 391–403 has biased composition (basic and acidic residues); it reads ESSKSEKEAEKLK. 2 disordered regions span residues 684–725 and 746–777; these read ENGY…EDET and KESA…EDEL. 2 stretches are compositionally biased toward basic and acidic residues: residues 685–699 and 706–725; these read NGYR…KVET and KLEE…EDET. The span at 759–769 shows a compositional bias: polar residues; that stretch reads VDQSQKTSPVN.

The protein belongs to the WEB family.

The protein localises to the plastid. It is found in the chloroplast. The polypeptide is WEB family protein At3g02930, chloroplastic (Arabidopsis thaliana (Mouse-ear cress)).